The primary structure comprises 269 residues: 15-hydroxyprostaglandin dehydrogenase [NAD(+)] (269 aa).

NAD(+)-binding positions include 12–20 (GAAQGIGKA), 36–37 (DW), 63–65 (CDV), and Asn-91. Positions 138 and 148 each coordinate substrate. Tyr-151 serves as the catalytic Proton acceptor. Residues 151–155 (YCASK) and 186–188 (VDT) contribute to the NAD(+) site.

It belongs to the short-chain dehydrogenases/reductases (SDR) family. In terms of assembly, homodimer. In terms of tissue distribution, expressed in proximal convoluted tubules of the kidney, where it colocalizes with the prostaglandin transporter SLC22A22 (at protein level). Expressed in lung, intestine, stomach and liver.

Its subcellular location is the cytoplasm. It carries out the reaction prostaglandin E2 + NAD(+) = 15-oxoprostaglandin E2 + NADH + H(+). The enzyme catalyses (15S)-hydroxy-(5Z,8Z,11Z,13E)-eicosatetraenoate + NAD(+) = 15-oxo-(5Z,8Z,11Z,13E)-eicosatetraenoate + NADH + H(+). It catalyses the reaction (11R)-hydroxy-(5Z,8Z,12E,14Z)-eicosatetraenoate + NAD(+) = 11-oxo-(5Z,8Z,12E,14Z)-eicosatetraenoate + NADH + H(+). The catalysed reaction is lipoxin A4 + NAD(+) = 15-oxo-(5S,6R)-dihydroxy-(7E,9E,11Z,13E)-eicosatetraenoate + NADH + H(+). It carries out the reaction 15-oxo-(5S,6R)-dihydroxy-(7E,9E,11Z)-eicosatrienoate + NADH + H(+) = (5S,6R,15S)-trihydroxy-(7E,9E,11Z)-eicosatrienoate + NAD(+). The enzyme catalyses prostaglandin A1 + NAD(+) = 15-oxo-prostaglandin A1 + NADH + H(+). It catalyses the reaction prostaglandin E1 + NAD(+) = 15-oxoprostaglandin E1 + NADH + H(+). The catalysed reaction is 14-hydroxy-(4Z,7Z,10Z,12E,16Z,19Z)-docosahexaenoate + NAD(+) = 14-oxo-(4Z,7Z,10Z,12E,16Z,19Z)-docosahexaenoate + NADH + H(+). It carries out the reaction resolvin E1 + NAD(+) = 18-oxo-resolvin E1 + NADH + H(+). The enzyme catalyses resolvin D1 + NAD(+) = 8-oxoresolvin D1 + NADH + H(+). It catalyses the reaction resolvin D1 + NAD(+) = 17-oxoresolvin D1 + NADH + H(+). The catalysed reaction is resolvin D2 + NAD(+) = 7-oxoresolvin D2 + NADH + H(+). It carries out the reaction resolvin D2 + NAD(+) = 16-oxoresolvin D2 + NADH + H(+). Catalyzes the NAD-dependent dehydrogenation (oxidation) of a broad array of hydroxylated polyunsaturated fatty acids (mainly eicosanoids and docosanoids, including prostaglandins, lipoxins and resolvins), yielding their corresponding keto (oxo) metabolites. Decreases the levels of the pro-proliferative prostaglandins such as prostaglandin E2 (whose activity is increased in cancer because of an increase in the expression of cyclooxygenase 2) and generates oxo-fatty acid products that can profoundly influence cell function by abrogating pro-inflammatory cytokine expression. Converts resolvins E1, D1 and D2 to their oxo products, which represents a mode of resolvin inactivation. Resolvin E1 plays important roles during the resolution phase of acute inflammation, while resolvins D1 and D2 have a unique role in obesity-induced adipose inflammation. The polypeptide is 15-hydroxyprostaglandin dehydrogenase [NAD(+)] (Hpgd) (Mus musculus (Mouse)).